A 337-amino-acid polypeptide reads, in one-letter code: Cytochrome P450 monooxygenase dpmpJ (337 aa).

Residues 4–24 traverse the membrane as a helical segment; it reads LILHHPYASLAAGILLYFFCL. Asn-158 is a glycosylation site (N-linked (GlcNAc...) asparagine).

It belongs to the cytochrome P450 family. Heme serves as cofactor.

It localises to the membrane. It functions in the pathway secondary metabolite biosynthesis; terpenoid biosynthesis. Cytochrome P450 monooxygenase; part of the gene cluster that mediates the biosynthesis of diterpenoid pyrones. The first step of the pathway is the synthesis of the alpha-pyrone moiety by the polyketide synthase dpmpA via condensation of one acetyl-CoA starter unit with 3 malonyl-CoA units and 2 methylations. The alpha-pyrone is then combined with geranylgeranyl pyrophosphate (GGPP) formed by the GGPP synthase dpmpD through the action of the prenyltransferase dpmpC to yield a linear alpha-pyrone diterpenoid. Subsequent steps in the diterpenoid pyrone biosynthetic pathway involve the decalin core formation, which is initiated by the epoxidation of the C10-C11 olefin by the FAD-dependent oxidoreductase dpmpE, and is followed by a cyclization cascade catalyzed by the terpene cyclase dpmpB. The short chain dehydrogenase/reductase dpmpG then oxidizes the 8S hydroxy group to a ketone and the short chain dehydrogenase/reductase dpmpH reduces the ketone to the 8R hydroxy group to yield higginsianin B. Higginsianin B is further methylated by the methyltransferase dpmpI to produce the intermediate named FDDP B. The cytochrome P450 monooxygenase dpmpJ then oxidizes the C-26 methyl to primary alcohol, producing the final diterpenoid pyrone with a C-26 primary alcohol on the gamma-pyrone moiety named FDDP C. The sequence is that of Cytochrome P450 monooxygenase dpmpJ from Macrophomina phaseolina (strain MS6) (Charcoal rot fungus).